A 248-amino-acid polypeptide reads, in one-letter code: Segregation and condensation protein A (248 aa).

The protein belongs to the ScpA family. As to quaternary structure, component of a cohesin-like complex composed of ScpA, ScpB and the Smc homodimer, in which ScpA and ScpB bind to the head domain of Smc. The presence of the three proteins is required for the association of the complex with DNA.

The protein resides in the cytoplasm. Functionally, participates in chromosomal partition during cell division. May act via the formation of a condensin-like complex containing Smc and ScpB that pull DNA away from mid-cell into both cell halves. In Bacillus cytotoxicus (strain DSM 22905 / CIP 110041 / 391-98 / NVH 391-98), this protein is Segregation and condensation protein A.